Consider the following 296-residue polypeptide: ATP synthase gamma chain (296 aa).

Belongs to the ATPase gamma chain family. F-type ATPases have 2 components, CF(1) - the catalytic core - and CF(0) - the membrane proton channel. CF(1) has five subunits: alpha(3), beta(3), gamma(1), delta(1), epsilon(1). CF(0) has three main subunits: a, b and c.

The protein localises to the cell membrane. In terms of biological role, produces ATP from ADP in the presence of a proton gradient across the membrane. The gamma chain is believed to be important in regulating ATPase activity and the flow of protons through the CF(0) complex. The chain is ATP synthase gamma chain from Pseudarthrobacter chlorophenolicus (strain ATCC 700700 / DSM 12829 / CIP 107037 / JCM 12360 / KCTC 9906 / NCIMB 13794 / A6) (Arthrobacter chlorophenolicus).